An 847-amino-acid polypeptide reads, in one-letter code: Capsid-associated protein AC83 (847 aa).

The first 19 residues, 1–19 (MMSGVMLLMLAIFLIIAFT), serve as a signal peptide directing secretion. The C2HC BV-type zinc-finger motif lies at 148 to 197 (CVPVPPCDNKSAGLYPMDERLLDTLVLNQHLDKDYSTNAHLYHPTFYLRC). Residues Asn156 and Asn211 are each glycosylated (N-linked (GlcNAc...) asparagine; by host). 2 disulfide bridges follow: Cys208–Cys221 and Cys261–Cys274. Residues 224–282 (NELCENRPDGYILSYFPSNLLVNQFMQCVNGRHVVGECPANKIFDRNLMSCVEAHPCAF) enclose the Chitin-binding type-2 domain. Residues Asn306, Asn337, Asn500, Asn592, Asn613, and Asn639 are each glycosylated (N-linked (GlcNAc...) asparagine; by host). Positions 665–698 (DHWVVAPPTAPPPPPEPEPEPEPEPEPEPELPSP) are disordered. Over residues 681-693 (PEPEPEPEPEPEP) the composition is skewed to acidic residues.

The protein localises to the virion. Plays an essential role in nucleocapsid assembly. Essential for the establishment of efficient per os infection. The sequence is that of Capsid-associated protein AC83 (p95) from Autographa californica nuclear polyhedrosis virus (AcMNPV).